The following is a 339-amino-acid chain: uncharacterized protein (339 aa).

28 to 35 (GPINSGKT) contributes to the ATP binding site.

Belongs to the archaeal ATPase family.

This is an uncharacterized protein from Pyrococcus abyssi (strain GE5 / Orsay).